Here is a 187-residue protein sequence, read N- to C-terminus: Elongation factor P (187 aa).

Belongs to the elongation factor P family.

The protein localises to the cytoplasm. It functions in the pathway protein biosynthesis; polypeptide chain elongation. Its function is as follows. Involved in peptide bond synthesis. Stimulates efficient translation and peptide-bond synthesis on native or reconstituted 70S ribosomes in vitro. Probably functions indirectly by altering the affinity of the ribosome for aminoacyl-tRNA, thus increasing their reactivity as acceptors for peptidyl transferase. In Rhodospirillum rubrum (strain ATCC 11170 / ATH 1.1.1 / DSM 467 / LMG 4362 / NCIMB 8255 / S1), this protein is Elongation factor P.